The sequence spans 270 residues: MAVGKNKGTSKGGKKGSKKKVVDPFTRKDWYDVKAPNMFSCRQVGKTLVNRTQGTRIASDGLKGRVFEVSLADLQNDTDAERSFRKFKLIAEDVHGRNVLCNFHGMDLTTDKLRSMVKKWQTLIECSVDVKTTDNYLLRVFCIGFTIKDQVSQRKTCYAQHSQIKAIRKNMTQIITNNVTSSDLKEVVNKLLPDSIAKDIEKACQGVYPLHDVYIRKVKVLKKPRFDLANLLELHGDGGGKGAEVSTGAAEGGVVVDRPEGYEPPVQESV.

2 disordered regions span residues 1–20 and 238–270; these read MAVGKNKGTSKGGKKGSKKK and GGGKGAEVSTGAAEGGVVVDRPEGYEPPVQESV.

It belongs to the eukaryotic ribosomal protein eS1 family. In terms of assembly, component of the small ribosomal subunit. Mature ribosomes consist of a small (40S) and a large (60S) subunit. The 40S subunit contains about 33 different proteins and 1 molecule of RNA (18S). The 60S subunit contains about 49 different proteins and 3 molecules of RNA (28S, 5.8S and 5S).

Its subcellular location is the cytoplasm. The chain is Small ribosomal subunit protein eS1 from Culex quinquefasciatus (Southern house mosquito).